Here is a 70-residue protein sequence, read N- to C-terminus: Spore germination protein-like protein YpzD (70 aa).

The protein belongs to the GerPA/GerPF family.

This is Spore germination protein-like protein YpzD (ypzD) from Bacillus subtilis (strain 168).